Here is a 334-residue protein sequence, read N- to C-terminus: Phosphate acyltransferase (334 aa).

The protein belongs to the PlsX family. As to quaternary structure, homodimer. Probably interacts with PlsY.

It is found in the cytoplasm. It catalyses the reaction a fatty acyl-[ACP] + phosphate = an acyl phosphate + holo-[ACP]. Its pathway is lipid metabolism; phospholipid metabolism. Catalyzes the reversible formation of acyl-phosphate (acyl-PO(4)) from acyl-[acyl-carrier-protein] (acyl-ACP). This enzyme utilizes acyl-ACP as fatty acyl donor, but not acyl-CoA. The chain is Phosphate acyltransferase from Caldicellulosiruptor saccharolyticus (strain ATCC 43494 / DSM 8903 / Tp8T 6331).